The sequence spans 313 residues: Postacrosomal sheath WW domain-binding protein (313 aa).

In terms of domain architecture, GRAM spans 8–87 (TESRRGALIP…GLMSDCTIEQ (80 aa)). 12 tandem repeats follow at residues 179-185 (YGPPPPG), 193-199 (YGTPPEG), 207-213 (YGAPPMG), 214-220 (YGAPPVG), 221-227 (YGVPPGG), 228-234 (YGVPPGG), 235-241 (YGVPPGG), 242-248 (YGAPPGG), 249-255 (YGVPPGG), 256-262 (YGAPPGG), 263-269 (YGAPPAG), and 270-276 (YGAPPAG). The 12 X 7 AA tandem repeat of Y-G-X-P-P-X-G stretch occupies residues 179–276 (YGPPPPGYTV…PAGYGAPPAG (98 aa)). The PPxY motif 1 signature appears at 183 to 186 (PPGY). Residues 254-264 (GGYGAPPGGYG) show a composition bias toward gly residues. Positions 254-313 (GGYGAPPGGYGAPPAGYGAPPAGNEALPPAYEAPSAGNTAASHRSMTAQQETSLPTTSSS) are disordered. Residues 265-276 (APPAGYGAPPAG) are compositionally biased toward low complexity. Residues 281–284 (PPAY) carry the PPxY motif 2 motif. Positions 289–313 (AGNTAASHRSMTAQQETSLPTTSSS) are enriched in polar residues.

In terms of tissue distribution, expressed in testis.

In terms of biological role, may play a role in meiotic resumption and pronuclear formation, mediated by a WW domain-signaling pathway during fertilization. The polypeptide is Postacrosomal sheath WW domain-binding protein (WBP2NL) (Bos taurus (Bovine)).